A 774-amino-acid chain; its full sequence is 5-methyltetrahydropteroyltriglutamate--homocysteine methyltransferase (774 aa).

Residues 24–27 and K120 each bind 5-methyltetrahydropteroyltri-L-glutamate; that span reads RELK. L-homocysteine is bound by residues 446 to 448 and E499; that span reads IGS. L-methionine is bound by residues 446–448 and E499; that span reads IGS. Residue W576 participates in 5-methyltetrahydropteroyltri-L-glutamate binding. D614 contacts L-homocysteine. D614 contributes to the L-methionine binding site. A 5-methyltetrahydropteroyltri-L-glutamate-binding site is contributed by E620. Zn(2+) is bound by residues H656, C658, and E680. H709 serves as the catalytic Proton donor. Zn(2+) is bound at residue C741.

It belongs to the vitamin-B12 independent methionine synthase family. The cofactor is Zn(2+).

The catalysed reaction is 5-methyltetrahydropteroyltri-L-glutamate + L-homocysteine = tetrahydropteroyltri-L-glutamate + L-methionine. It functions in the pathway amino-acid biosynthesis; L-methionine biosynthesis via de novo pathway; L-methionine from L-homocysteine (MetE route): step 1/1. Catalyzes the transfer of a methyl group from 5-methyltetrahydrofolate to homocysteine resulting in methionine formation. This Streptomyces griseus subsp. griseus (strain JCM 4626 / CBS 651.72 / NBRC 13350 / KCC S-0626 / ISP 5235) protein is 5-methyltetrahydropteroyltriglutamate--homocysteine methyltransferase.